Here is a 484-residue protein sequence, read N- to C-terminus: Keratin, type I cytoskeletal 14 (484 aa).

The segment at 1–20 is disordered; sequence MATCSRQFTSSSSMKGSCGI. Positions 1-120 are head; the sequence is MATCSRQFTS…GIGDGLLVGS (120 aa). The interval 121 to 156 is coil 1A; it reads EKVTMQNLNDRLATYLDKVRALEEANTELEVKIRDW. The region spanning 121–432 is the IF rod domain; sequence EKVTMQNLND…RLLEGEDAHL (312 aa). The segment at 157–174 is linker 1; the sequence is YQRQRPTEIKDYSPYFKT. The interval 175-266 is coil 1B; it reads IEDLKSKILA…KNHEEEMASM (92 aa). A linker 12 region spans residues 267 to 289; the sequence is RGQVGGDVNVEMDAAPGVDLSRI. The coil 2 stretch occupies residues 290-428; sequence LNEMRDQYEK…ATYRRLLEGE (139 aa). Residues 429-484 are tail; sequence DAHLSSSQFSSSSQFSSGSQSSRDVTSTNRQIRTKVMDVHDGKVVSTHEQVLRTKN. The tract at residues 431–484 is interaction with Type I keratins and keratin filaments; that stretch reads HLSSSQFSSSSQFSSGSQSSRDVTSTNRQIRTKVMDVHDGKVVSTHEQVLRTKN. The segment covering 435–450 has biased composition (low complexity); that stretch reads SQFSSSSQFSSGSQSS. The interval 435–457 is disordered; sequence SQFSSSSQFSSGSQSSRDVTSTN. Phosphoserine is present on serine 447.

This sequence belongs to the intermediate filament family. As to quaternary structure, heterotetramer of two type I and two type II keratins. Forms a disulfide-linked heterodimer (via 2B domains) with KRT5 (via 2B domains). Forms a heterodimer with KRT1; the interaction is more abundant in the absence of KRT5. Interacts with PLEC isoform 1C, when in a heterodimer with KRT5. Interacts with TRADD and with keratin filaments. Associates with other type I keratins. Interacts with EPPK1. Interacts with KLHL24. Interacts with PKP1 (via N-terminus) and PKP2. A disulfide bond is formed between rather than within filaments and promotes the formation of a keratin filament cage around the nucleus. In terms of processing, ubiquitinated by the BCR(KLHL24) E3 ubiquitin ligase complex. In terms of tissue distribution, expressed in the corneal epithelium (at protein level). Expressed in the basal layer of the epidermis and the outer root sheath of hair follicles (at protein level). Expressed in the epithelial basal layer in the tail epidermis. Expressed in the parabasal cell row, basal cell layer, and suprabasal epithelial layer of the tongue.

It localises to the cytoplasm. The protein resides in the nucleus. The nonhelical tail domain is involved in promoting KRT5-KRT14 filaments to self-organize into large bundles and enhances the mechanical properties involved in resilience of keratin intermediate filaments in vitro. The protein is Keratin, type I cytoskeletal 14 (Krt14) of Mus musculus (Mouse).